Reading from the N-terminus, the 892-residue chain is Protein RRP6-like 3 (892 aa).

The region spanning 119 to 287 (YVWVETESQL…IADSLTTELK (169 aa)) is the 3'-5' exonuclease domain. Residues 350–436 (SLNAEELVRK…CSHLDDIYKM (87 aa)) form the HRDC domain. Residues 785-811 (VDDSGDGTSEGDGAKELNDTQCNGNTL) are disordered.

It is found in the cytoplasm. The protein resides in the cytosol. In Arabidopsis thaliana (Mouse-ear cress), this protein is Protein RRP6-like 3.